A 219-amino-acid polypeptide reads, in one-letter code: Cytidylate kinase (219 aa).

9–17 contributes to the ATP binding site; it reads GPAGSGKTT.

The protein belongs to the cytidylate kinase family. Type 1 subfamily.

Its subcellular location is the cytoplasm. The catalysed reaction is CMP + ATP = CDP + ADP. The enzyme catalyses dCMP + ATP = dCDP + ADP. The sequence is that of Cytidylate kinase from Fervidobacterium nodosum (strain ATCC 35602 / DSM 5306 / Rt17-B1).